The sequence spans 281 residues: Dexamethasone-induced Ras-related protein 1 (281 aa).

The residue at position 11 (cysteine 11) is an S-nitrosocysteine. A GTP-binding site is contributed by 31–38 (GSSKVGKT). The Effector region signature appears at 53–61 (YTPTIEDFH). GTP is bound by residues 78 to 82 (DTSGN) and 145 to 148 (NKGD). At cysteine 278 the chain carries Cysteine methyl ester. Residue cysteine 278 is the site of S-farnesyl cysteine attachment. The propeptide at 279-281 (VIS) is removed in mature form.

It belongs to the small GTPase superfamily. RasD family. In terms of assembly, forms a ternary complex with CAPON and NOS1. Component of a complex, at least composed of APBB1, RASD1/DEXRAS1 and APP. Interacts with APBB1/FE65. Post-translationally, S-nitrosylation stimulates guanine-nucleotide exchange activity. In terms of tissue distribution, expressed in a variety of tissues including heart, cardiovascular tissues, brain, placenta, lung, liver, skeletal muscle, kidney, pancreas, gastrointestinal and reproductive tissues.

The protein resides in the cell membrane. It is found in the cytoplasm. Its subcellular location is the perinuclear region. It localises to the nucleus. Small GTPase. Negatively regulates the transcription regulation activity of the APBB1/FE65-APP complex via its interaction with APBB1/FE65. This Homo sapiens (Human) protein is Dexamethasone-induced Ras-related protein 1 (RASD1).